A 381-amino-acid polypeptide reads, in one-letter code: Formate dehydrogenase, mitochondrial (381 aa).

The transit peptide at 1-25 (MAMSRVASTAARAITSPSSLVFTRE) directs the protein to the mitochondrion. Substrate is bound by residues Ile-125 and Asn-149. NAD(+) is bound by residues Thr-150, 204–205 (RI), Asp-224, 259–263 (PLTEK), Asn-285, Asp-311, and 335–338 (HISG).

It belongs to the D-isomer specific 2-hydroxyacid dehydrogenase family. FDH subfamily. In terms of assembly, homodimer. Found at high levels in developing tubers, at intermediate level in stems, veins, stolons, and stamens, and at low level in leaves and roots.

It localises to the mitochondrion. The enzyme catalyses formate + NAD(+) = CO2 + NADH. Functionally, catalyzes the NAD(+)-dependent oxidation of formate to carbon dioxide. Involved in the cell stress response. Involved in formate-dependent oxygen uptake coupled to ATP synthesis. The sequence is that of Formate dehydrogenase, mitochondrial from Solanum tuberosum (Potato).